The chain runs to 139 residues: Ribosome-binding factor A (139 aa).

Belongs to the RbfA family. In terms of assembly, monomer. Binds 30S ribosomal subunits, but not 50S ribosomal subunits or 70S ribosomes.

It is found in the cytoplasm. Functionally, one of several proteins that assist in the late maturation steps of the functional core of the 30S ribosomal subunit. Associates with free 30S ribosomal subunits (but not with 30S subunits that are part of 70S ribosomes or polysomes). Required for efficient processing of 16S rRNA. May interact with the 5'-terminal helix region of 16S rRNA. The sequence is that of Ribosome-binding factor A from Methylobacterium sp. (strain 4-46).